Consider the following 567-residue polypeptide: Proline--tRNA ligase (567 aa).

The protein belongs to the class-II aminoacyl-tRNA synthetase family. ProS type 1 subfamily. As to quaternary structure, homodimer.

The protein localises to the cytoplasm. It catalyses the reaction tRNA(Pro) + L-proline + ATP = L-prolyl-tRNA(Pro) + AMP + diphosphate. Its function is as follows. Catalyzes the attachment of proline to tRNA(Pro) in a two-step reaction: proline is first activated by ATP to form Pro-AMP and then transferred to the acceptor end of tRNA(Pro). As ProRS can inadvertently accommodate and process non-cognate amino acids such as alanine and cysteine, to avoid such errors it has two additional distinct editing activities against alanine. One activity is designated as 'pretransfer' editing and involves the tRNA(Pro)-independent hydrolysis of activated Ala-AMP. The other activity is designated 'posttransfer' editing and involves deacylation of mischarged Ala-tRNA(Pro). The misacylated Cys-tRNA(Pro) is not edited by ProRS. The sequence is that of Proline--tRNA ligase from Staphylococcus epidermidis (strain ATCC 35984 / DSM 28319 / BCRC 17069 / CCUG 31568 / BM 3577 / RP62A).